Reading from the N-terminus, the 209-residue chain is Thymidine kinase (209 aa).

Residues 9–16 (AAMNAGKS) and 88–91 (DEAQ) each bind ATP. The active-site Proton acceptor is Glu89. Zn(2+) is bound by residues Cys146, Cys148, Cys183, and His186.

Belongs to the thymidine kinase family. In terms of assembly, homotetramer.

The protein resides in the cytoplasm. It carries out the reaction thymidine + ATP = dTMP + ADP + H(+). In Legionella pneumophila subsp. pneumophila (strain Philadelphia 1 / ATCC 33152 / DSM 7513), this protein is Thymidine kinase.